We begin with the raw amino-acid sequence, 236 residues long: WUSCHEL-related homeobox 4 (236 aa).

A DNA-binding region (homeobox; WUS-type) is located at residues 88–152; that stretch reads AGTTRWNPSA…NHKARERQKQ (65 aa). The interval 169–188 is disordered; sequence PATANETKEAPEKKEKDVED. Basic and acidic residues predominate over residues 174-187; that stretch reads ETKEAPEKKEKDVE.

This sequence belongs to the WUS homeobox family.

It is found in the nucleus. In terms of biological role, transcription factor which may be involved in developmental processes. In Oryza sativa subsp. indica (Rice), this protein is WUSCHEL-related homeobox 4 (WOX4).